We begin with the raw amino-acid sequence, 690 residues long: Methionine--tRNA ligase (690 aa).

The short motif at 12 to 22 (PYANGPLHLGH) is the 'HIGH' region element. Positions 144, 147, 157, and 160 each coordinate Zn(2+). A 'KMSKS' region motif is present at residues 333-337 (QFSKS). Lys336 lines the ATP pocket. In terms of domain architecture, tRNA-binding spans 535 to 632 (KKINIDLMVG…VNADDGSRMK (98 aa)).

This sequence belongs to the class-I aminoacyl-tRNA synthetase family. MetG type 1 subfamily. As to quaternary structure, homodimer. Zn(2+) serves as cofactor.

It is found in the cytoplasm. It carries out the reaction tRNA(Met) + L-methionine + ATP = L-methionyl-tRNA(Met) + AMP + diphosphate. In terms of biological role, is required not only for elongation of protein synthesis but also for the initiation of all mRNA translation through initiator tRNA(fMet) aminoacylation. The sequence is that of Methionine--tRNA ligase from Picrophilus torridus (strain ATCC 700027 / DSM 9790 / JCM 10055 / NBRC 100828 / KAW 2/3).